We begin with the raw amino-acid sequence, 412 residues long: Light-independent protochlorophyllide reductase subunit N (412 aa).

Residues cysteine 16, cysteine 41, and cysteine 102 each contribute to the [4Fe-4S] cluster site.

The protein belongs to the BchN/ChlN family. As to quaternary structure, protochlorophyllide reductase is composed of three subunits; ChlL, ChlN and ChlB. Forms a heterotetramer of two ChlB and two ChlN subunits. [4Fe-4S] cluster serves as cofactor.

It catalyses the reaction chlorophyllide a + oxidized 2[4Fe-4S]-[ferredoxin] + 2 ADP + 2 phosphate = protochlorophyllide a + reduced 2[4Fe-4S]-[ferredoxin] + 2 ATP + 2 H2O. Its pathway is porphyrin-containing compound metabolism; chlorophyll biosynthesis (light-independent). In terms of biological role, component of the dark-operative protochlorophyllide reductase (DPOR) that uses Mg-ATP and reduced ferredoxin to reduce ring D of protochlorophyllide (Pchlide) to form chlorophyllide a (Chlide). This reaction is light-independent. The NB-protein (ChlN-ChlB) is the catalytic component of the complex. The polypeptide is Light-independent protochlorophyllide reductase subunit N (Synechococcus sp. (strain RCC307)).